The sequence spans 368 residues: Peptide chain release factor 2 (368 aa).

An N5-methylglutamine modification is found at Gln-249.

This sequence belongs to the prokaryotic/mitochondrial release factor family. In terms of processing, methylated by PrmC. Methylation increases the termination efficiency of RF2.

It is found in the cytoplasm. Functionally, peptide chain release factor 2 directs the termination of translation in response to the peptide chain termination codons UGA and UAA. The sequence is that of Peptide chain release factor 2 from Rhodococcus erythropolis (strain PR4 / NBRC 100887).